The sequence spans 685 residues: Frizzled-8 (685 aa).

The first 27 residues, 1 to 27 (MEWGYLLEVTSLLAALAVLQRSSGAAA), serve as a signal peptide directing secretion. At 28-272 (ASAKELACQE…NPFFSQDERA (245 aa)) the chain is on the extracellular side. The FZ domain maps to 30-151 (AKELACQEIT…GNPDTLCMDY (122 aa)). Disulfide bonds link Cys35–Cys96, Cys43–Cys89, Cys80–Cys118, Cys107–Cys148, and Cys111–Cys135. A glycan (N-linked (GlcNAc...) asparagine) is linked at Asn49. Residue 71–78 (QFWPLVEI) participates in hexadecanoate binding. The interval 95–100 (ICLEDY) is wnt-binding. Residues 147–152 (LCMDYN) are wnt-binding. A glycan (N-linked (GlcNAc...) asparagine) is linked at Asn152. The interval 155–223 (DLTTAAPSPP…KARPPGGGAA (69 aa)) is disordered. Residues 161–176 (PSPPRRLPPPPPPGEQ) are compositionally biased toward pro residues. Composition is skewed to low complexity over residues 177–187 (PPSGSGHSRPP) and 200–223 (GSGD…GGAA). The helical transmembrane segment at 273-293 (FTVFWIGLWSVLCFVSTFATV) threads the bilayer. Residues 294-309 (STFLIDMERFKYPERP) are Cytoplasmic-facing. A helical transmembrane segment spans residues 310–330 (IIFLSACYLFVSVGYLVRLVA). Over 331 to 394 (GHEKVACSGG…RYETTGPALC (64 aa)) the chain is Extracellular. Residues 395–415 (TVVFLLVYFFGMASSIWWVIL) traverse the membrane as a helical segment. At 416 to 437 (SLTWFLAAGMKWGNEAIAGYSQ) the chain is on the cytoplasmic side. A helical membrane pass occupies residues 438 to 458 (YFHLAAWLVPSVKSIAVLALS). The Extracellular portion of the chain corresponds to 459–481 (SVDGDPVAGICYVGNQSLDNLRG). Asn473 carries an N-linked (GlcNAc...) asparagine glycan. A helical transmembrane segment spans residues 482–502 (FVLAPLVIYLFIGTMFLLAGF). Over 503-530 (VSLFRIRSVIKQQGGPTKTHKLEKLMIR) the chain is Cytoplasmic. The helical transmembrane segment at 531 to 551 (LGLFTVLYTVPAAVVVACLFY) threads the bilayer. Topologically, residues 552-582 (EQHNRPRWEATHNCPCLRDLQPDQARRPDYA) are extracellular. The chain crosses the membrane as a helical span at residues 583-603 (VFMLKYFMCLVVGITSGVWVW). The Cytoplasmic segment spans residues 604-685 (SGKTLESWRA…YPKQMPLSQV (82 aa)). A Lys-Thr-X-X-X-Trp motif, mediates interaction with the PDZ domain of Dvl family members motif is present at residues 606–611 (KTLESW). A compositionally biased stretch (gly residues) spans 631-655 (AGGSGPGGSGPGPGGGGGHGGGGGS). The segment at 631 to 656 (AGGSGPGGSGPGPGGGGGHGGGGGSL) is disordered. The PDZ-binding motif lies at 683–685 (SQV).

It belongs to the G-protein coupled receptor Fz/Smo family. In terms of assembly, component of a Wnt-signaling complex that contains a WNT protein, a FZD protein and LRP5 or LRP6. Interacts directly with LRP5 or LRP6; the interaction is promoted by Wnt-binding and signaling and inhibited by DKK1. Interacts (via the PDZ-binding motif) with GPOC (via its PDZ domain). Interacts with RSPO1 and RSPO3. Interacts with glypican GPC3. Post-translationally, ubiquitinated by ZNRF3, leading to its degradation by the proteasome. Expressed in chondrocytes.

The protein localises to the membrane. The protein resides in the golgi apparatus. Its subcellular location is the cell membrane. Its function is as follows. Receptor for Wnt proteins. Component of the Wnt-Fzd-LRP5-LRP6 complex that triggers beta-catenin signaling through inducing aggregation of receptor-ligand complexes into ribosome-sized signalosomes. The beta-catenin canonical signaling pathway leads to the activation of disheveled proteins, inhibition of GSK-3 kinase, nuclear accumulation of beta-catenin and activation of Wnt target genes. A second signaling pathway involving PKC and calcium fluxes has been seen for some family members, but it is not yet clear if it represents a distinct pathway or if it can be integrated in the canonical pathway, as PKC seems to be required for Wnt-mediated inactivation of GSK-3 kinase. Both pathways seem to involve interactions with G-proteins. May be involved in transduction and intercellular transmission of polarity information during tissue morphogenesis and/or in differentiated tissues. Coreceptor along with RYK of Wnt proteins, such as WNT1. This is Frizzled-8 (Fzd8) from Mus musculus (Mouse).